We begin with the raw amino-acid sequence, 316 residues long: Small ribosomal subunit protein RACK1 (316 aa).

WD repeat units lie at residues 4 to 46 (QMTL…WRLT), 52 to 93 (YGVP…WDLS), 94 to 135 (TGQT…WNTL), 137 to 180 (VCKY…WNLT), 181 to 221 (NCKL…LWDL), 222 to 263 (NEGK…WDLE), and 264 to 312 (GKVV…WQVS).

This sequence belongs to the WD repeat G protein beta family. Ribosomal protein RACK1 subfamily.

The sequence is that of Small ribosomal subunit protein RACK1 from Biomphalaria glabrata (Bloodfluke planorb).